The primary structure comprises 313 residues: tRNA dimethylallyltransferase (313 aa).

10-17 (GPTASGKT) is an ATP binding site. Substrate is bound at residue 12 to 17 (TASGKT). 3 interaction with substrate tRNA regions span residues 35–38 (DSAM), 159–163 (QRIQR), and 240–245 (RCVGYR).

The protein belongs to the IPP transferase family. Monomer. Mg(2+) is required as a cofactor.

The catalysed reaction is adenosine(37) in tRNA + dimethylallyl diphosphate = N(6)-dimethylallyladenosine(37) in tRNA + diphosphate. In terms of biological role, catalyzes the transfer of a dimethylallyl group onto the adenine at position 37 in tRNAs that read codons beginning with uridine, leading to the formation of N6-(dimethylallyl)adenosine (i(6)A). This Legionella pneumophila (strain Lens) protein is tRNA dimethylallyltransferase.